The sequence spans 827 residues: uncharacterized protein (827 aa).

This is an uncharacterized protein from Methanocaldococcus jannaschii (strain ATCC 43067 / DSM 2661 / JAL-1 / JCM 10045 / NBRC 100440) (Methanococcus jannaschii).